The primary structure comprises 331 residues: dTDP-glucose 4,6-dehydratase (331 aa).

Residues 11–12, 33–36, 57–58, 77–81, and serine 96 each bind NAD(+); these read FI, DALT, DI, and FAAET. Threonine 81 contacts substrate. Position 120 (threonine 120) interacts with substrate. Aspartate 121 (proton donor) is an active-site residue. Catalysis depends on proton acceptor residues glutamate 122 and tyrosine 147. Position 147 to 151 (147 to 151) interacts with NAD(+); it reads YSSTK. A substrate-binding site is contributed by asparagine 176. Asparagine 177 contacts NAD(+). Substrate is bound by residues 186–191, 202–204, arginine 211, asparagine 246, and 269–273; these read KFIPRQ, KLY, and DRAGH.

Belongs to the NAD(P)-dependent epimerase/dehydratase family. dTDP-glucose dehydratase subfamily. Homodimer. It depends on NAD(+) as a cofactor.

It carries out the reaction dTDP-alpha-D-glucose = dTDP-4-dehydro-6-deoxy-alpha-D-glucose + H2O. It functions in the pathway carbohydrate biosynthesis; dTDP-L-rhamnose biosynthesis. In terms of biological role, catalyzes the dehydration of dTDP-D-glucose to form dTDP-6-deoxy-D-xylo-4-hexulose via a three-step process involving oxidation, dehydration and reduction. Involved in the biosynthesis of the dTDP-L-rhamnose which is a component of the critical linker, D-N-acetylglucosamine-L-rhamnose disaccharide, which connects the galactan region of arabinogalactan to peptidoglycan via a phosphodiester linkage. In Mycolicibacterium smegmatis (strain ATCC 700084 / mc(2)155) (Mycobacterium smegmatis), this protein is dTDP-glucose 4,6-dehydratase (rmlB).